A 311-amino-acid polypeptide reads, in one-letter code: Olfactory receptor 6C3 (311 aa).

The Extracellular segment spans residues 1–22 (MNHTMVTEFVLLGLSDDPDLQI). The N-linked (GlcNAc...) asparagine glycan is linked to Asn-2. The helical transmembrane segment at 23–43 (VIFLFLFITYILSVTGNLTII) threads the bilayer. The Cytoplasmic segment spans residues 44–51 (TLTFVDSH). A helical transmembrane segment spans residues 52 to 72 (LQTPMYFFLRNFSFLEISFTT). The Extracellular segment spans residues 73–96 (VCIPRFLGAIITRNKTISYNNCAA). Cys-94 and Cys-186 are disulfide-bonded. A helical transmembrane segment spans residues 97–117 (QLFFFIFMGVTEFYILTAMSY). The Cytoplasmic portion of the chain corresponds to 118–136 (DRYVAICKPLHYTSIMNRK). A helical membrane pass occupies residues 137 to 157 (LCTLLVLCAWLSGFLTIFPPL). Over 158–194 (MLLLQLDYCASNVIDHFACDYFPLLQLSCSDTWLLEV) the chain is Extracellular. The helical transmembrane segment at 195 to 214 (IGFYFALVTLLFTLALVILS) threads the bilayer. Over 215–234 (YMYIIRTILRIPSASQRKKA) the chain is Cytoplasmic. The helical transmembrane segment at 235 to 255 (FSTCSSHMIVISISYGSCIFM) threads the bilayer. The Extracellular portion of the chain corresponds to 256-268 (YANPSAKEKASLT). The chain crosses the membrane as a helical span at residues 269–289 (KGIAILNTSVAPMLNPFIYTL). The Cytoplasmic segment spans residues 290–311 (RNQQVKQAFKNVVHKVVFYANQ).

The protein belongs to the G-protein coupled receptor 1 family.

Its subcellular location is the cell membrane. Odorant receptor. This chain is Olfactory receptor 6C3 (OR6C3), found in Homo sapiens (Human).